A 346-amino-acid chain; its full sequence is Phosphate acyltransferase (346 aa).

Belongs to the PlsX family. In terms of assembly, homodimer. Probably interacts with PlsY.

The protein resides in the cytoplasm. The enzyme catalyses a fatty acyl-[ACP] + phosphate = an acyl phosphate + holo-[ACP]. It participates in lipid metabolism; phospholipid metabolism. Catalyzes the reversible formation of acyl-phosphate (acyl-PO(4)) from acyl-[acyl-carrier-protein] (acyl-ACP). This enzyme utilizes acyl-ACP as fatty acyl donor, but not acyl-CoA. This is Phosphate acyltransferase from Pelobacter propionicus (strain DSM 2379 / NBRC 103807 / OttBd1).